The sequence spans 376 residues: Queuine tRNA-ribosyltransferase (376 aa).

Asp93 (proton acceptor) is an active-site residue. Residues 93 to 97 (DSGGF), Asp147, Gln190, and Gly217 contribute to the substrate site. The RNA binding stretch occupies residues 248–254 (GVGKPGD). Asp267 acts as the Nucleophile in catalysis. Residues Cys305, Cys307, Cys310, and His336 each coordinate Zn(2+).

Belongs to the queuine tRNA-ribosyltransferase family. As to quaternary structure, homodimer. Within each dimer, one monomer is responsible for RNA recognition and catalysis, while the other monomer binds to the replacement base PreQ1. The cofactor is Zn(2+).

It carries out the reaction 7-aminomethyl-7-carbaguanine + guanosine(34) in tRNA = 7-aminomethyl-7-carbaguanosine(34) in tRNA + guanine. It participates in tRNA modification; tRNA-queuosine biosynthesis. Functionally, catalyzes the base-exchange of a guanine (G) residue with the queuine precursor 7-aminomethyl-7-deazaguanine (PreQ1) at position 34 (anticodon wobble position) in tRNAs with GU(N) anticodons (tRNA-Asp, -Asn, -His and -Tyr). Catalysis occurs through a double-displacement mechanism. The nucleophile active site attacks the C1' of nucleotide 34 to detach the guanine base from the RNA, forming a covalent enzyme-RNA intermediate. The proton acceptor active site deprotonates the incoming PreQ1, allowing a nucleophilic attack on the C1' of the ribose to form the product. After dissociation, two additional enzymatic reactions on the tRNA convert PreQ1 to queuine (Q), resulting in the hypermodified nucleoside queuosine (7-(((4,5-cis-dihydroxy-2-cyclopenten-1-yl)amino)methyl)-7-deazaguanosine). The polypeptide is Queuine tRNA-ribosyltransferase (Dinoroseobacter shibae (strain DSM 16493 / NCIMB 14021 / DFL 12)).